Reading from the N-terminus, the 860-residue chain is DNA primase (860 aa).

The CHC2-type zinc-finger motif lies at 804-842 (CLNRQHRGNRDNVLVYIQLKADGNRLILILWSTCFATKC).

The protein belongs to the herpesviridae DNA primase family. Associates with the helicase and the primase-associated factor to form the helicase-primase factor.

It localises to the host nucleus. In terms of biological role, essential component of the helicase/primase complex. Unwinds the DNA at the replication forks and generates single-stranded DNA for both leading and lagging strand synthesis. The primase initiates primer synthesis and thereby produces large amount of short RNA primers on the lagging strand that the polymerase elongates using dNTPs. This is DNA primase (U43) from Homo sapiens (Human).